The sequence spans 406 residues: Probable UDP-arabinose 4-epimerase 3 (406 aa).

The Cytoplasmic segment spans residues 1–26; that stretch reads MIPLNRRASQTRGGMEYFDARRKPHN. The chain crosses the membrane as a helical; Signal-anchor for type II membrane protein span at residues 27–44; the sequence is VGKVIAALVLTTLCIFIL. At 45–406 the chain is on the lumenal side; it reads KQSPGFGGSS…KSHPRGYGSN (362 aa). 65 to 96 provides a ligand contact to NAD(+); the sequence is HVLVTGGAGYIGSHASLRLLKDNYRVTIVDNL. The Proton acceptor role is filled by Tyr213.

The protein belongs to the NAD(P)-dependent epimerase/dehydratase family. It depends on NAD(+) as a cofactor.

The protein localises to the golgi apparatus. The protein resides in the golgi stack membrane. It carries out the reaction UDP-beta-L-arabinopyranose = UDP-alpha-D-xylose. Its pathway is nucleotide-sugar biosynthesis; UDP-L-arabinose biosynthesis; UDP-L-arabinose from UDP-alpha-D-xylose: step 1/1. The protein operates within cell wall biogenesis; cell wall polysaccharide biosynthesis. This Oryza sativa subsp. japonica (Rice) protein is Probable UDP-arabinose 4-epimerase 3 (UEL-3).